The following is a 310-amino-acid chain: Glutaminase (310 aa).

Substrate contacts are provided by Ser-66, Asn-117, Glu-161, Asn-168, Tyr-192, Tyr-244, and Val-262.

The protein belongs to the glutaminase family. As to quaternary structure, homotetramer.

It carries out the reaction L-glutamine + H2O = L-glutamate + NH4(+). This is Glutaminase from Desulfovibrio desulfuricans (strain ATCC 27774 / DSM 6949 / MB).